Consider the following 429-residue polypeptide: Na(+)/H(+) antiporter NhaA 1 (429 aa).

Helical transmembrane passes span 32-52, 73-93, 111-131, 140-160, 170-190, 193-213, 219-239, 243-263, 284-304, 316-336, 349-369, and 383-403; these read ISGG…NSPW, LSVQ…VAGL, VVPV…YSLL, GWAI…AVVG, FLLT…AVAY, ELSV…TLLV, AWWL…ASGV, VAGV…AGGP, VAVP…LGGL, VVVG…WLVA, WVDV…SLLI, and HVKV…TVVL.

It belongs to the NhaA Na(+)/H(+) (TC 2.A.33) antiporter family.

Its subcellular location is the cell membrane. The catalysed reaction is Na(+)(in) + 2 H(+)(out) = Na(+)(out) + 2 H(+)(in). Na(+)/H(+) antiporter that extrudes sodium in exchange for external protons. This chain is Na(+)/H(+) antiporter NhaA 1, found in Frankia alni (strain DSM 45986 / CECT 9034 / ACN14a).